The sequence spans 192 residues: Ribosome maturation factor RimM (192 aa).

In terms of domain architecture, PRC barrel spans 115–189; the sequence is EGEYYLSDLI…RIEITPPKGL (75 aa).

It belongs to the RimM family. Binds ribosomal protein uS19.

It localises to the cytoplasm. Functionally, an accessory protein needed during the final step in the assembly of 30S ribosomal subunit, possibly for assembly of the head region. Essential for efficient processing of 16S rRNA. May be needed both before and after RbfA during the maturation of 16S rRNA. It has affinity for free ribosomal 30S subunits but not for 70S ribosomes. In Acaryochloris marina (strain MBIC 11017), this protein is Ribosome maturation factor RimM.